The primary structure comprises 845 residues: Beta-mannosidase B (845 aa).

The tract at residues Met1–Asp20 is disordered. Asn252 carries N-linked (GlcNAc...) asparagine glycosylation. Glu432 functions as the Proton donor in the catalytic mechanism. Residues Asn717 and Asn723 are each glycosylated (N-linked (GlcNAc...) asparagine).

This sequence belongs to the glycosyl hydrolase 2 family. Beta-mannosidase B subfamily.

The catalysed reaction is Hydrolysis of terminal, non-reducing beta-D-mannose residues in beta-D-mannosides.. It participates in glycan metabolism; N-glycan degradation. Exoglycosidase that cleaves the single beta-linked mannose residue from the non-reducing end of beta-mannosidic oligosaccharides of various complexity and length. Prefers mannobiose over mannotriose and has no activity against polymeric mannan. Is also severely restricted by galactosyl substitutions at the +1 subsite. The sequence is that of Beta-mannosidase B (mndB) from Neosartorya fischeri (strain ATCC 1020 / DSM 3700 / CBS 544.65 / FGSC A1164 / JCM 1740 / NRRL 181 / WB 181) (Aspergillus fischerianus).